A 651-amino-acid chain; its full sequence is E3 SUMO-protein ligase PIAS1 (651 aa).

Position 2 is an N-acetylalanine (A2). Positions 2 to 200 are required for interaction with MSX1; it reads ADSAELKQMV…KCDFTVQVQL (199 aa). An SAP domain is found at 11 to 45; it reads VMSLRVSELQVLLGYAGRNKHGRKHELLTKALHLL. The LXXLL motif motif lies at 19–23; it reads LQVLL. Residues K40 and K46 each participate in a glycyl lysine isopeptide (Lys-Gly) (interchain with G-Cter in SUMO2) cross-link. The Nuclear localization signal signature appears at 56 to 64; it reads KIKELYRRR. The region spanning 124-288 is the PINIT domain; that stretch reads HLTSALHPVH…SMAVYLVKQL (165 aa). Residues K137 and K238 each participate in a glycyl lysine isopeptide (Lys-Gly) (interchain with G-Cter in SUMO2) cross-link. The SP-RING-type zinc finger occupies 320-405; it reads PDSEIATTSL…LKYCTDCDEI (86 aa). Residues C351, H353, C374, and C377 each coordinate Zn(2+). Positions 368 to 380 match the Nuclear localization signal motif; it reads KKPTWVCPVCDKK. Residue K453 forms a Glycyl lysine isopeptide (Lys-Gly) (interchain with G-Cter in SUMO2) linkage. The SUMO1-binding stretch occupies residues 462-473; sequence LTIDSSSDEEEE. Positions 465–511 are disordered; that stretch reads DSSSDEEEEEPSAKRTCPSLSPTSPLNNKGILSLPHQASPVSRTPSL. A phosphoserine mark is found at S467, S468, S483, and S485. Over residues 482–491 the composition is skewed to polar residues; it reads PSLSPTSPLN. Phosphothreonine is present on T487. S488 is subject to Phosphoserine. A Glycyl lysine isopeptide (Lys-Gly) (interchain with G-Cter in SUMO2) cross-link involves residue K493. Phosphoserine occurs at positions 503, 510, and 522. 2 tandem repeats follow at residues 520–523 and 557–560. The interval 520-615 is 4 X 4 AA repeats of N-T-S-L; sequence NTSLIQDYRH…GSSSGSNSSL (96 aa). A 3; approximate repeat occupies 598–601; it reads STSL. Low complexity predominate over residues 599–621; the sequence is TSLPTTNGSSSGSNSSLVSSNSL. The interval 599–632 is disordered; it reads TSLPTTNGSSSGSNSSLVSSNSLRESHSHTVTNR. A 4; approximate repeat occupies 612–615; the sequence is NSSL.

This sequence belongs to the PIAS family. Interacts with NCOA2 and AR. Interacts with NR2C1; the interaction promotes its sumoylation. Interacts with DDX21, CSRP2, AXIN1, JUN, UBE2I, SUMO1, SATB2, PLAG1, TP53 and STAT1 (dimer), following IFNA1-stimulation. Interacts with SP3 (preferentially when SUMO-modified). Interacts with KLF8; the interaction results in SUMO ligation and repression of KLF8 transcriptional activity and of its cell cycle progression into G(1) phase. Interacts with CHUK/IKKA; this interaction induces PIAS1 phosphorylation. Interacts with PTK2/FAK1; the interaction promotes its sumoylation. Interacts with DDX5. Interacts with PML. Interacts with MTA1. Interacts with SUMO1P1/SUMO5. Interacts with PRDM1/Blimp-1. Interacts (via N-terminus) with MSX1 (via C-terminus); the interaction is required for the localization of both proteins to the nuclear periphery and specific binding of MSX1 to the core enhancer region in target gene promoters. As to quaternary structure, (Microbial infection) Interacts with ebolavirus VP35; this interaction mediates the sumoylation of IRF7 and contributes to the viral inhibition of IFN-type I production. Post-translationally, sumoylated. Expressed in numerous tissues with highest level in testis.

It localises to the nucleus. The protein resides in the nucleus speckle. It is found in the PML body. Its subcellular location is the cytoplasm. The protein localises to the cytoskeleton. Its pathway is protein modification; protein sumoylation. Its function is as follows. Functions as an E3-type small ubiquitin-like modifier (SUMO) ligase, stabilizing the interaction between UBE2I and the substrate, and as a SUMO-tethering factor. Catalyzes sumoylation of various proteins, such as CEBPB, MRE11, MTA1, PTK2 and PML. Plays a crucial role as a transcriptional coregulation in various cellular pathways, including the STAT pathway, the p53 pathway and the steroid hormone signaling pathway. In vitro, binds A/T-rich DNA. The effects of this transcriptional coregulation, transactivation or silencing, may vary depending upon the biological context. Mediates sumoylation of MRE11, stabilizing MRE11 on chromatin during end resection. Sumoylates PML (at 'Lys-65' and 'Lys-160') and PML-RAR and promotes their ubiquitin-mediated degradation. PIAS1-mediated sumoylation of PML promotes its interaction with CSNK2A1/CK2 which in turn promotes PML phosphorylation and degradation. Enhances the sumoylation of MTA1 and may participate in its paralog-selective sumoylation. Plays a dynamic role in adipogenesis by promoting the SUMOylation and degradation of CEBPB. Mediates the nuclear mobility and localization of MSX1 to the nuclear periphery, whereby MSX1 is brought into the proximity of target myoblast differentiation factor genes. Also required for the binding of MSX1 to the core enhancer region in target gene promoter regions, independent of its sumoylation activity. Capable of binding to the core enhancer region TAAT box in the MYOD1 gene promoter. Functionally, (Microbial infection) Restricts Epstein-Barr virus (EBV) lytic replication by acting as an inhibitor for transcription factors involved in lytic gene expression. The virus can use apoptotic caspases to antagonize PIAS1-mediated restriction and express its lytic genes. The chain is E3 SUMO-protein ligase PIAS1 (PIAS1) from Homo sapiens (Human).